Reading from the N-terminus, the 511-residue chain is FAD-dependent monooxygenase AOL_s00215g279 (511 aa).

Positions 1–17 (MRFTLYGLLGFASLLHA) are cleaved as a signal peptide. Residues 85–256 (CWVNPACIVS…TEFDLRTRYS (172 aa)) form the FAD-binding PCMH-type domain. His-122 is modified (pros-8alpha-FAD histidine).

It belongs to the oxygen-dependent FAD-linked oxidoreductase family.

Its pathway is secondary metabolite biosynthesis; terpenoid biosynthesis. Its function is as follows. FAD-dependent monooxygenase; part of the gene cluster that mediates the biosynthesis of sesquiterpenyl epoxy-cyclohexenoids (SECs) such as anthrobotrisins and arthrosporols, metabolites that possess a novel hybrid carbon skeleton consisting of a polyketide-derived epoxycyclohexenol combined with a terpenoid-derived monocyclic sesquiterpenol substructure (PKS-PTS hybrid). The SEC pathway plays an important role for fungal soil colonization via decreasing fungal nematode-capturing ability. Within the pathway, the FAD-dependent monooxygenase AOL_s00215g279 plays a role in the oxygenation of the phenol moiety, most likely in the epoxy formation. The pathway begins with the biosynthesis of 6-methylsalicylic acid (6-MSA), the first precursor of the polyketide-derived epoxycyclohexenol in arthrosporols, by the polyketide synthase (PKS) AOL_s00215g283 via condensation of 1 acetate and 3 malonate units. The 6-methylsalicylic acid decarboxylase AOL_s00215g281 then catalyzes the decarboxylation of 6-methylsalicylic acid to yield m-cresol. The cytochrome P450 monooxygenase AOL_s00215g282 further oxidizes m-cresol to yield toluquinol. With the assistance of the oxidoreductase AOL_s00215g277, the polyprenyl transferase AOL_s00215g276 catalyzes the farnesylation of toluquinol to produce farnesyl hydroquinone, the hybrid precursor for biosynthesis of SECs. Farnesyl hydroquinone undergoes epoxidation and then subsequent dehydrogenation to form farnesyl epoxy-quinone, the first and simplest SEC. The cytochrome P450 monooxygenase AOL_s00215g278 and the FAD-dependent monooxygenase AOL_s00215g279 might be involved in the oxygenation of the phenol moiety, most likely in the epoxy formation. The cytochrome P450 monooxygenases AOL_s00215g274 and AOL_s00215g280 are involved in specific regional ketone reductions at respectively C-4 and C-1 of farnesyl epoxy-quinone PubMed:33823587. The protein is FAD-dependent monooxygenase AOL_s00215g279 of Arthrobotrys oligospora (strain ATCC 24927 / CBS 115.81 / DSM 1491) (Nematode-trapping fungus).